A 421-amino-acid polypeptide reads, in one-letter code: 26S proteasome non-ATPase regulatory subunit 11A (421 aa).

The 165-residue stretch at 227–391 folds into the PCI domain; sequence AYSYFYEAFE…GVLIVFDEPP (165 aa).

This sequence belongs to the proteasome subunit S9 family. In terms of assembly, component of the lid subcomplex of the 19S proteasome regulatory particle complex (also named PA700 complex). The 26S proteasome consists of a 20S proteasome core and two 19S regulatory subunits.

It is found in the nucleus. The protein resides in the cytoplasm. The protein localises to the cytosol. In terms of biological role, component of the lid subcomplex of the 26S proteasome, a multiprotein complex involved in the ATP-dependent degradation of ubiquitinated proteins. In the complex, psmd11a is required for proteasome assembly. The sequence is that of 26S proteasome non-ATPase regulatory subunit 11A (psmd11a) from Danio rerio (Zebrafish).